A 310-amino-acid chain; its full sequence is Putative carboxypeptidase SCO6489 (310 aa).

Ser116 serves as the catalytic Nucleophile. Catalysis depends on charge relay system residues Glu212 and His277.

Belongs to the peptidase S66 family.

The polypeptide is Putative carboxypeptidase SCO6489 (Streptomyces coelicolor (strain ATCC BAA-471 / A3(2) / M145)).